Reading from the N-terminus, the 332-residue chain is MPRPVLLIHGGAGDISDSRIAGKFAGIKQALRSAWGLLSPDNGSGGGSALDAVEAAVRSMELDENFNAGYGSCLNTSGQVELEASLMEGRDLRAGCITLLRDVMHPITVARRLMEKQRHTFLGGAAAQELALATGSERLQPGALVTEGARLTLKEFEDQVAQGKDPFFARTELTDDKPVPKTDPSGETVGAVAMDASGQIVVGTSTGGITGKWPGRIGDTPILGSGTYADNCRGGVSTTGHGETLMRYNLAQRILSAMEYQGLSAQAAADKECREMTKRLGGTGGAIVVGHSGDLGISFTSRRMAWGYVQDGTIFYGIEGQVVHQEPFTLST.

Catalysis depends on T188, which acts as the Nucleophile. Residues 216-219 (RIGD) and 239-242 (TGHG) each bind substrate.

This sequence belongs to the Ntn-hydrolase family. Heterodimer of an alpha and beta chain produced by autocleavage. In terms of processing, cleaved into an alpha and beta chain by autocatalysis; this activates the enzyme. The N-terminal residue of the beta subunit is responsible for the nucleophile hydrolase activity.

It carries out the reaction L-asparagine + H2O = L-aspartate + NH4(+). It catalyses the reaction Cleavage of a beta-linked Asp residue from the N-terminus of a polypeptide.. Has both L-asparaginase and beta-aspartyl peptidase activity. Does not have aspartylglucosaminidase activity and is inactive toward GlcNAc-L-Asn. Likewise, has no activity toward glutamine. In Drosophila melanogaster (Fruit fly), this protein is Probable isoaspartyl peptidase/L-asparaginase CG7860.